We begin with the raw amino-acid sequence, 197 residues long: Adenylyl-sulfate kinase (197 aa).

An ATP-binding site is contributed by 33 to 40 (GLSGSGKS). Residue serine 107 is the Phosphoserine intermediate of the active site.

This sequence belongs to the APS kinase family.

The catalysed reaction is adenosine 5'-phosphosulfate + ATP = 3'-phosphoadenylyl sulfate + ADP + H(+). It participates in sulfur metabolism; hydrogen sulfide biosynthesis; sulfite from sulfate: step 2/3. Its function is as follows. Catalyzes the synthesis of activated sulfate. This chain is Adenylyl-sulfate kinase, found in Bacillus licheniformis (strain ATCC 14580 / DSM 13 / JCM 2505 / CCUG 7422 / NBRC 12200 / NCIMB 9375 / NCTC 10341 / NRRL NRS-1264 / Gibson 46).